Here is a 429-residue protein sequence, read N- to C-terminus: Gamma-glutamyl phosphate reductase (429 aa).

Belongs to the gamma-glutamyl phosphate reductase family.

The protein localises to the cytoplasm. It carries out the reaction L-glutamate 5-semialdehyde + phosphate + NADP(+) = L-glutamyl 5-phosphate + NADPH + H(+). The protein operates within amino-acid biosynthesis; L-proline biosynthesis; L-glutamate 5-semialdehyde from L-glutamate: step 2/2. Its function is as follows. Catalyzes the NADPH-dependent reduction of L-glutamate 5-phosphate into L-glutamate 5-semialdehyde and phosphate. The product spontaneously undergoes cyclization to form 1-pyrroline-5-carboxylate. The sequence is that of Gamma-glutamyl phosphate reductase from Nocardioides sp. (strain ATCC BAA-499 / JS614).